A 96-amino-acid chain; its full sequence is Protein RnfH (96 aa).

Belongs to the UPF0125 (RnfH) family.

This is Protein RnfH from Psychromonas ingrahamii (strain DSM 17664 / CCUG 51855 / 37).